The chain runs to 131 residues: Global transcriptional regulator Spx 2 (131 aa).

A disulfide bond links cysteine 10 and cysteine 13.

The protein belongs to the ArsC family. Spx subfamily. As to quaternary structure, interacts with the C-terminal domain of the alpha subunit of the RNAP.

It localises to the cytoplasm. Global transcriptional regulator that plays a key role in stress response and exerts either positive or negative regulation of genes. Acts by interacting with the C-terminal domain of the alpha subunit of the RNA polymerase (RNAP). This interaction can enhance binding of RNAP to the promoter region of target genes and stimulate their transcription, or block interaction of RNAP with activator. This chain is Global transcriptional regulator Spx 2, found in Bacillus anthracis.